Consider the following 192-residue polypeptide: Xanthine phosphoribosyltransferase (192 aa).

Xanthine-binding residues include Leu-20 and Asn-27. 128 to 132 (ANGDA) provides a ligand contact to 5-phospho-alpha-D-ribose 1-diphosphate. Position 156 (Lys-156) interacts with xanthine.

Belongs to the purine/pyrimidine phosphoribosyltransferase family. Xpt subfamily. Homodimer.

The protein resides in the cytoplasm. It catalyses the reaction XMP + diphosphate = xanthine + 5-phospho-alpha-D-ribose 1-diphosphate. Its pathway is purine metabolism; XMP biosynthesis via salvage pathway; XMP from xanthine: step 1/1. In terms of biological role, converts the preformed base xanthine, a product of nucleic acid breakdown, to xanthosine 5'-monophosphate (XMP), so it can be reused for RNA or DNA synthesis. This Staphylococcus aureus (strain JH1) protein is Xanthine phosphoribosyltransferase.